The chain runs to 224 residues: MRYPVDVYTGKIQAYPEGKPSAIAKIQVDGELMLTELGLEGDEQAEKKVHGGPDRALCHYPREHYLYWAREFPEQAELFVAPAFGENLSTDGLTESNVYMGDIFRWGEALIQVSQPRSPCYKLNYHFDISDIAQLMQNTGKVGWLYSVIAPGKVSADAPLELVSRVSDVTVQEAAAIAWHMPFDDDQYHRLLSAAGLSKSWTRTMQKRRLSGKIEDFSRRLWGK.

The region spanning 26 to 163 (IQVDGELMLT…VSADAPLELV (138 aa)) is the MOSC domain.

Monomer.

This chain is Protein YiiM (yiiM), found in Escherichia coli (strain K12).